A 538-amino-acid chain; its full sequence is Lipid scramblase CLPTM1L (538 aa).

The Cytoplasmic portion of the chain corresponds to 1-10; the sequence is MWSGRSSFTS. A helical membrane pass occupies residues 11–31; that stretch reads LVVGVFVVYVVHTCWVMYGIV. Topologically, residues 32–284 are extracellular; sequence YTRPCSGHGR…VKGIFVDTNL (253 aa). 2 N-linked (GlcNAc...) asparagine glycosylation sites follow: Asn91 and Asn101. Residues 285-305 traverse the membrane as a helical segment; that stretch reads YFLALTFFVAAFHLLFDFLAF. At 306 to 324 the chain is on the cytoplasmic side; sequence KNDISFWKKKKSMIGMSTK. Residues 325–341 form a helical membrane-spanning segment; it reads AVLWRCFSTVVIFLFLL. Over 342 to 402 the chain is Extracellular; sequence DEQTSLPVLV…TEEYDAQAMK (61 aa). Residues 403–423 traverse the membrane as a helical segment; sequence YLSYLLYPLCIGGAIYSLLNI. Residues 424-428 are Cytoplasmic-facing; it reads KYKSW. The chain crosses the membrane as a helical span at residues 429 to 449; sequence YSWLINSFVNGVYAFGFLFML. Residues 450 to 538 lie on the Extracellular side of the membrane; that stretch reads PQLFVNYKMK…DTPQRKPHTD (89 aa).

Belongs to the CLPTM1 family.

It localises to the endoplasmic reticulum membrane. It carries out the reaction a 6-(alpha-D-glucosaminyl)-1-(1,2-diacyl-sn-glycero-3-phospho)-1D-myo-inositol(in) = a 6-(alpha-D-glucosaminyl)-1-(1,2-diacyl-sn-glycero-3-phospho)-1D-myo-inositol(out). The enzyme catalyses 6-(alpha-D-glucosaminyl)-(1-octadecanoyl,2-(9Z)-octadecenoyl-sn-glycero-3-phospho)-1D-myo-inositol(in) = 6-(alpha-D-glucosaminyl)-(1-octadecanoyl,2-(9Z)-octadecenoyl-sn-glycero-3-phospho)-1D-myo-inositol(out). The catalysed reaction is a 1,2-diacyl-sn-glycero-3-phospho-(1D-myo-inositol)(in) = a 1,2-diacyl-sn-glycero-3-phospho-(1D-myo-inositol)(out). It catalyses the reaction a 1,2-diacyl-sn-glycero-3-phosphocholine(in) = a 1,2-diacyl-sn-glycero-3-phosphocholine(out). It carries out the reaction a 1,2-diacyl-sn-glycero-3-phosphoethanolamine(in) = a 1,2-diacyl-sn-glycero-3-phosphoethanolamine(out). Functionally, scramblase that mediates the translocation of glucosaminylphosphatidylinositol (alpha-D-GlcN-(1-6)-(1,2-diacyl-sn-glycero-3-phospho)-1D-myo-inositol, GlcN-PI) across the endoplasmic reticulum (ER) membrane, from the cytosolic leaflet to the luminal leaflet of the ER membrane, where it participates in the biosynthesis of glycosylphosphatidylinositol (GPI). GPI is a lipid glycoconjugate involved in post-translational modification of proteins. Can also translocate 1,2-diacyl-sn-glycero-3-phospho-(1D-myo-inositol) (phosphatidylinositol or PI), as well as several other phospholipids (1,2-diacyl-sn-glycero-3-phosphocholine, 1,2-diacyl-sn-glycero-3-phosphoethanolamine), and N-acetylglucosaminylphosphatidylinositol (GlcNAc-PI) in vitro. The polypeptide is Lipid scramblase CLPTM1L (CLPTM1L) (Bos taurus (Bovine)).